The sequence spans 1574 residues: Plexin-C1 (1574 aa).

A signal peptide spans 1-34 (MEVSRRKTPPRPPYPAAPLPLIAYLLALAAPARG). The 418-residue stretch at 35-452 (ADEPVWRSEQ…AGKEVRRIPV (418 aa)) folds into the Sema domain. The Extracellular portion of the chain corresponds to 35–950 (ADEPVWRSEQ…YVEQESVPST (916 aa)). A disulfide bridge links C64 with C87. N-linked (GlcNAc...) asparagine glycosylation is found at N86, N143, and N149. An intrachain disulfide couples C156 to C194. N252 carries N-linked (GlcNAc...) asparagine glycosylation. An intrachain disulfide couples C283 to C329. Residues N386 and N407 are each glycosylated (N-linked (GlcNAc...) asparagine). 4 disulfide bridges follow: C455–C472, C461–C506, C464–C481, and C475–C487. 3 N-linked (GlcNAc...) asparagine glycosylation sites follow: N694, N773, and N802. Residues 951–971 (WYFLIALPILLAIVIVVAVVV) traverse the membrane as a helical segment. Residues 972–1574 (TRYKSKELSR…FDEKKKCKWM (603 aa)) are Cytoplasmic-facing. Residue S984 is modified to Phosphoserine.

Belongs to the plexin family. Monomer. Homodimer. Interacts with SEMA7A. As to expression, detected on dendritic cells, skin Langerhans cells and neutrophils (at protein level).

The protein localises to the membrane. Receptor for SEMA7A, for vaccinia virus semaphorin A39R and for herpesvirus Sema protein. Binding of semaphorins triggers cellular responses leading to the rearrangement of the cytoskeleton and to secretion of IL6 and IL8. This is Plexin-C1 (Plxnc1) from Mus musculus (Mouse).